Here is a 404-residue protein sequence, read N- to C-terminus: S-adenosylmethionine synthase (404 aa).

Residue His-18 participates in ATP binding. Asp-20 lines the Mg(2+) pocket. Glu-46 lines the K(+) pocket. L-methionine is bound by residues Glu-59 and Gln-102. A flexible loop region spans residues 102-112; that stretch reads QSPEIAQGVDH. ATP contacts are provided by residues 178–180, 249–250, Asp-258, 264–265, Ala-281, and Lys-285; these read DGK, KF, and RK. Asp-258 provides a ligand contact to L-methionine. Lys-289 is a binding site for L-methionine.

It belongs to the AdoMet synthase family. In terms of assembly, homotetramer; dimer of dimers. The cofactor is Mg(2+). K(+) serves as cofactor.

The protein localises to the cytoplasm. It carries out the reaction L-methionine + ATP + H2O = S-adenosyl-L-methionine + phosphate + diphosphate. Its pathway is amino-acid biosynthesis; S-adenosyl-L-methionine biosynthesis; S-adenosyl-L-methionine from L-methionine: step 1/1. Catalyzes the formation of S-adenosylmethionine (AdoMet) from methionine and ATP. The overall synthetic reaction is composed of two sequential steps, AdoMet formation and the subsequent tripolyphosphate hydrolysis which occurs prior to release of AdoMet from the enzyme. This is S-adenosylmethionine synthase from Rhodococcus opacus (strain B4).